Here is a 146-residue protein sequence, read N- to C-terminus: Antiholin-like protein LrgA (146 aa).

Helical transmembrane passes span 7-29 (YGFL…IAAI), 34-53 (IPAS…LKVI), 65-87 (LTSL…LGVM), and 97-119 (VILL…ILSL).

Belongs to the CidA/LrgA family. LrgA subfamily.

It localises to the cell membrane. Inhibits the expression or activity of extracellular murein hydrolases by interacting, possibly with LrgB, with the holin-like protein CidA. The LrgAB and CidA proteins may affect the proton motive force of the membrane. May be involved in programmed cell death (PCD), possibly triggering PCD in response to antibiotics and environmental stresses. The polypeptide is Antiholin-like protein LrgA (Bacillus subtilis (strain 168)).